The following is a 131-amino-acid chain: Probable histone H2A.3 (131 aa).

Positions 1 to 23 are disordered; the sequence is MAGRGKQLGSGAAKKSTSRSSKA. The span at 9–23 shows a compositional bias: low complexity; it reads GSGAAKKSTSRSSKA.

It belongs to the histone H2A family. As to quaternary structure, the nucleosome is a histone octamer containing two molecules each of H2A, H2B, H3 and H4 assembled in one H3-H4 heterotetramer and two H2A-H2B heterodimers. The octamer wraps approximately 147 bp of DNA. In terms of processing, not ubiquitinated. As to expression, expressed in meristems and dividing cells.

Its subcellular location is the nucleus. It localises to the chromosome. Its function is as follows. Core component of nucleosome. Nucleosomes wrap and compact DNA into chromatin, limiting DNA accessibility to the cellular machineries which require DNA as a template. Histones thereby play a central role in transcription regulation, DNA repair, DNA replication and chromosomal stability. DNA accessibility is regulated via a complex set of post-translational modifications of histones, also called histone code, and nucleosome remodeling. This chain is Probable histone H2A.3, found in Arabidopsis thaliana (Mouse-ear cress).